A 430-amino-acid polypeptide reads, in one-letter code: Target of rapamycin complex 1 subunit toc1 (430 aa).

Phosphoserine occurs at positions 204 and 399.

The target of rapamycin complex 1 (TORC1) is composed of at least mip1, pop3/wat1, tco89, toc1 and tor2.

It is found in the cytoplasm. Component of TORC1, which regulates multiple cellular processes to control cell growth in response to environmental signals. Tor2 is essential for growth. Nutrient limitation and environmental stress signals cause inactivation of TORC1. Active TORC1 positively controls cell growth and ribosome biogenesis by regulating ribosomal protein gene expression. TORC1 negatively controls G1 cell-cycle arrest, sexual development and amino acid uptake. Represses mating, meiosis and sporulation efficiency by interfering with the functions of the transcription factor ste11 and the meiosis-promoting RNA-binding protein mei2. The sequence is that of Target of rapamycin complex 1 subunit toc1 from Schizosaccharomyces pombe (strain 972 / ATCC 24843) (Fission yeast).